A 452-amino-acid polypeptide reads, in one-letter code: Probable receptor-like protein kinase At5g20050 (452 aa).

The signal sequence occupies residues 1-23; that stretch reads MEDKKANIIATILILALVVVIIA. Residues 24–33 are Extracellular-facing; it reads ARVSLKLSKT. A helical transmembrane segment spans residues 34–54; the sequence is FYLIAGVDISLILAVICFLII. Topologically, residues 55–452 are cytoplasmic; sequence RSRYNKERKL…SSIISPISPR (398 aa). A Protein kinase domain is found at 103 to 392; the sequence is DGFRSLIGKG…MVIEMLEGRV (290 aa). ATP contacts are provided by residues 109-117 and lysine 131; that span reads IGKGGSGSV. Tyrosine 178 is subject to Phosphotyrosine. The Proton acceptor role is filled by aspartate 236. Phosphothreonine occurs at positions 270 and 275.

This sequence belongs to the protein kinase superfamily. Ser/Thr protein kinase family.

It localises to the membrane. The catalysed reaction is L-seryl-[protein] + ATP = O-phospho-L-seryl-[protein] + ADP + H(+). It carries out the reaction L-threonyl-[protein] + ATP = O-phospho-L-threonyl-[protein] + ADP + H(+). The protein is Probable receptor-like protein kinase At5g20050 of Arabidopsis thaliana (Mouse-ear cress).